The primary structure comprises 67 residues: Small ribosomal subunit protein eS17 (67 aa).

This sequence belongs to the eukaryotic ribosomal protein eS17 family.

This Haloquadratum walsbyi (strain DSM 16790 / HBSQ001) protein is Small ribosomal subunit protein eS17.